Here is a 595-residue protein sequence, read N- to C-terminus: Beta-hexosaminidase 1 (595 aa).

The N-terminal stretch at 1 to 20 (MRFAYLATLAGSLLAGLAQA) is a signal peptide. N-linked (GlcNAc...) asparagine glycosylation is present at N313.

The protein belongs to the glycosyl hydrolase 20 family.

The catalysed reaction is Hydrolysis of terminal non-reducing N-acetyl-D-hexosamine residues in N-acetyl-beta-D-hexosaminides.. In terms of biological role, beta-hexosaminidase that shows a broad substrate specificity. The polypeptide is Beta-hexosaminidase 1 (Coccidioides posadasii (strain RMSCC 757 / Silveira) (Valley fever fungus)).